The following is a 168-amino-acid chain: ATP synthase F(1) complex subunit delta, mitochondrial (168 aa).

A mitochondrion-targeting transit peptide spans 1–22 (MLPASLLRHPGLRRLMLQARTY). 2 positions are modified to N6-acetyllysine; alternate: lysine 136 and lysine 165. An N6-succinyllysine; alternate mark is found at lysine 136 and lysine 165.

The protein belongs to the ATPase epsilon chain family. As to quaternary structure, component of the ATP synthase complex composed at least of ATP5F1A/subunit alpha, ATP5F1B/subunit beta, ATP5MC1/subunit c (homooctomer), MT-ATP6/subunit a, MT-ATP8/subunit 8, ATP5ME/subunit e, ATP5MF/subunit f, ATP5MG/subunit g, ATP5MK/subunit k, ATP5MJ/subunit j, ATP5F1C/subunit gamma, ATP5F1D/subunit delta, ATP5F1E/subunit epsilon, ATP5PF/subunit F6, ATP5PB/subunit b, ATP5PD/subunit d, ATP5PO/subunit OSCP. ATP synthase complex consists of a soluble F(1) head domain (subunits alpha(3) and beta(3)) - the catalytic core - and a membrane F(0) domain - the membrane proton channel (subunits c, a, 8, e, f, g, k and j). These two domains are linked by a central stalk (subunits gamma, delta, and epsilon) rotating inside the F1 region and a stationary peripheral stalk (subunits F6, b, d, and OSCP). Component of a complex composed at least by ATPIF1, ATP5F1A, ATP5F1B, ATP5F1C AND ATP5F1E.

The protein resides in the mitochondrion. Its subcellular location is the mitochondrion inner membrane. Functionally, subunit delta, of the mitochondrial membrane ATP synthase complex (F(1)F(0) ATP synthase or Complex V) that produces ATP from ADP in the presence of a proton gradient across the membrane which is generated by electron transport complexes of the respiratory chain. ATP synthase complex consist of a soluble F(1) head domain - the catalytic core - and a membrane F(1) domain - the membrane proton channel. These two domains are linked by a central stalk rotating inside the F(1) region and a stationary peripheral stalk. During catalysis, ATP synthesis in the catalytic domain of F(1) is coupled via a rotary mechanism of the central stalk subunits to proton translocation. In vivo, can only synthesize ATP although its ATP hydrolase activity can be activated artificially in vitro. With the central stalk subunit gamma, is essential for the biogenesis of F(1) catalytic part of the ATP synthase complex namely in the formation of F1 assembly intermediate. The sequence is that of ATP synthase F(1) complex subunit delta, mitochondrial from Mus musculus (Mouse).